Consider the following 196-residue polypeptide: uncharacterized protein (196 aa).

This sequence belongs to the CDP-alcohol phosphatidyltransferase class-I family.

This is an uncharacterized protein from Aquifex aeolicus (strain VF5).